The sequence spans 235 residues: Ribitol-5-phosphate cytidylyltransferase (235 aa).

CTP contacts are provided by residues Leu-7 to Gly-10, Gly-82 to Ser-88, and Ser-113.

It belongs to the IspD/TarI cytidylyltransferase family. TarI subfamily.

The enzyme catalyses D-ribitol 5-phosphate + CTP + H(+) = CDP-L-ribitol + diphosphate. Its pathway is cell wall biogenesis; poly(ribitol phosphate) teichoic acid biosynthesis. Functionally, catalyzes the transfer of the cytidylyl group of CTP to D-ribitol 5-phosphate. The sequence is that of Ribitol-5-phosphate cytidylyltransferase from Streptococcus pneumoniae serotype 19F (strain G54).